Here is a 971-residue protein sequence, read N- to C-terminus: MQSNLLKVLGVLAIVATLVCFIFAALGMIGAVRIGNGCYMRYSKDGNGGADSITNTITLNANANYFNISKMLPDGTTKLIPDPNRYGEWLNTQVLVEKNQQVNLQVVGQVSLCLAYLPKNNLQFTERTRPGKSNLDDSNQMIPIPRVQDANSPPVSLIMDAKNNEWRNIAELYANDKVLVSVSPNFANTDATVDDVFKGVKVTKDCTQGKTSYYPICGKYSIYSGKYVTACELKQNYWKGNVHREECYCVFGCIYQEENEQWICDAANSASHCCTSLVCDSLPAWINHYSNMPEAYKDDGSFTFSWSDKSGNLLIDYQDLQCSNNVQIPPNGECPDIVDNRNPKDKDYIGGVHCTSGICKDGDFQKNRKFWYTADGKGGKGPTGLIYQMNNTGSVSQALPSNLEFAKFVPETEQPPEYKDKNGKYLYKVIYNIPFNSNIEKSYLQYRLWSPTSQDSSKNTGGYVLNIKQTKCYRENGNSFKDIFDDRGRVQYIIVQSSENPNTSGKTYAPQGINVDSDGKSHFNANEAGYIWMKILNDPSNNLKDYKDSEGSYKVHFSTSLKVGSFTIKVMNPLLQLFKTKVQGAATSIFKNMVCYKSTDNTSCTNFFTYIKAILILYVMTYGAMFLLGFAKINQKELVIRIAKIGMVSGLINGNTFEFFNNYLFDAITNFSDSIIANMSGYSLFTSTNTISNPFMFLDAIMSKIFFSQTFIAQLLSLLSLGLSGIIYFIITFIAVCIVIITTLRAIAVYIMAFMATCILIGIAPLFISFLLFDFTRYLFDNWVRFTIRYMIEPVVMMAGIIVLTQLFTIYLDFVLGYSVCWKCTLPIKIPFIGTILPIALLNVPIFCINWFAPWGMDYMSGMMGVNMQNIVALVIIAYGMYGYVEFSGRMVAKLTSAAGPSATQIGDRMSHDAGQKTLSQIGMDYRTRKGITSRAKSRLKQRNRTLEHAEQNSKKYMKKIGENTNEGTLK.

A signal peptide spans 1 to 24; the sequence is MQSNLLKVLGVLAIVATLVCFIFA. Residues 127–146 form a disordered region; it reads RTRPGKSNLDDSNQMIPIPR. Helical transmembrane passes span 611-631, 721-741, 753-773, 795-815, 832-852, and 865-885; these read IKAI…LGFA, LGLS…IVII, AFMA…FLLF, VVMM…LDFV, FIGT…INWF, and GVNM…YGYV. The span at 933 to 944 shows a compositional bias: basic residues; it reads TSRAKSRLKQRN. The interval 933–971 is disordered; the sequence is TSRAKSRLKQRNRTLEHAEQNSKKYMKKIGENTNEGTLK. The span at 945–954 shows a compositional bias: basic and acidic residues; the sequence is RTLEHAEQNS.

Belongs to the TrbL/VirB6 family.

The protein localises to the cell membrane. This is an uncharacterized protein from Rickettsia typhi (strain ATCC VR-144 / Wilmington).